A 377-amino-acid chain; its full sequence is Nitric oxide reductase FlRd-NAD(+) reductase (377 aa).

This sequence belongs to the FAD-dependent oxidoreductase family. FAD serves as cofactor.

Its subcellular location is the cytoplasm. The catalysed reaction is 2 reduced [nitric oxide reductase rubredoxin domain] + NAD(+) + H(+) = 2 oxidized [nitric oxide reductase rubredoxin domain] + NADH. The protein operates within nitrogen metabolism; nitric oxide reduction. Its function is as follows. One of at least two accessory proteins for anaerobic nitric oxide (NO) reductase. Reduces the rubredoxin moiety of NO reductase. The chain is Nitric oxide reductase FlRd-NAD(+) reductase from Citrobacter koseri (strain ATCC BAA-895 / CDC 4225-83 / SGSC4696).